A 166-amino-acid polypeptide reads, in one-letter code: NAD(P)H-quinone oxidoreductase subunit I, chloroplastic (166 aa).

2 4Fe-4S ferredoxin-type domains span residues 55-84 and 95-124; these read GRIHFEFDKCIACEVCVRVCPIDLPVVDWK and LNYSIDFGICIFCGNCVEYCPTNCLSMTEE. Residues Cys64, Cys67, Cys70, Cys74, Cys104, Cys107, Cys110, and Cys114 each contribute to the [4Fe-4S] cluster site.

The protein belongs to the complex I 23 kDa subunit family. As to quaternary structure, NDH is composed of at least 16 different subunits, 5 of which are encoded in the nucleus. [4Fe-4S] cluster serves as cofactor.

The protein resides in the plastid. It is found in the chloroplast thylakoid membrane. It catalyses the reaction a plastoquinone + NADH + (n+1) H(+)(in) = a plastoquinol + NAD(+) + n H(+)(out). The catalysed reaction is a plastoquinone + NADPH + (n+1) H(+)(in) = a plastoquinol + NADP(+) + n H(+)(out). NDH shuttles electrons from NAD(P)H:plastoquinone, via FMN and iron-sulfur (Fe-S) centers, to quinones in the photosynthetic chain and possibly in a chloroplast respiratory chain. The immediate electron acceptor for the enzyme in this species is believed to be plastoquinone. Couples the redox reaction to proton translocation, and thus conserves the redox energy in a proton gradient. The sequence is that of NAD(P)H-quinone oxidoreductase subunit I, chloroplastic from Rensonia salvadorica.